An 802-amino-acid chain; its full sequence is Acetyl-CoA decarbonylase/synthase complex subunit alpha (802 aa).

The [4Fe-4S] cluster site is built by Cys69, Cys72, Cys73, Cys75, Cys80, and Cys90. His113 is a binding site for CO. [Ni-4Fe-4S] cluster is bound by residues His246, Cys274, and Cys319. 2 4Fe-4S ferredoxin-type domains span residues 404–432 and 442–473; these read EELKELADSCVHCLKCEVACPNSLPISEA and SKFELLHDKCIACGRCEYACPKDIDIVNVIEK. Residues Cys413, Cys416, Cys419, Cys423, Cys451, Cys454, Cys457, and Cys461 each coordinate [4Fe-4S] cluster. 3 residues coordinate [Ni-4Fe-4S] cluster: Cys519, Cys548, and Cys583.

This sequence belongs to the Ni-containing carbon monoxide dehydrogenase family. In terms of assembly, heterotetramer of two alpha and two epsilon subunits. The ACDS complex is made up of alpha, epsilon, beta, gamma and delta subunits with a probable stoichiometry of (alpha(2)epsilon(2))(4)-beta(8)-(gamma(1)delta(1))(8). [4Fe-4S] cluster serves as cofactor. The cofactor is [Ni-4Fe-4S] cluster.

It carries out the reaction CO + 2 oxidized [2Fe-2S]-[ferredoxin] + H2O = 2 reduced [2Fe-2S]-[ferredoxin] + CO2 + 2 H(+). Its pathway is one-carbon metabolism; methanogenesis from acetate. Its function is as follows. Part of the ACDS complex that catalyzes the reversible cleavage of acetyl-CoA, allowing growth on acetate as sole source of carbon and energy. The alpha-epsilon subcomponent functions as a carbon monoxide dehydrogenase. This Methanococcoides burtonii (strain DSM 6242 / NBRC 107633 / OCM 468 / ACE-M) protein is Acetyl-CoA decarbonylase/synthase complex subunit alpha.